Consider the following 659-residue polypeptide: Exoribonuclease 2 (659 aa).

The RNB domain maps to 189–532 (REDLTHLYFT…HRLIKQVLSN (344 aa)). The S1 motif domain occupies 576-658 (NVEFDGEIQD…ETRSVVGDVL (83 aa)).

Belongs to the RNR ribonuclease family. RNase II subfamily.

The protein localises to the cytoplasm. It catalyses the reaction Exonucleolytic cleavage in the 3'- to 5'-direction to yield nucleoside 5'-phosphates.. In terms of biological role, involved in mRNA degradation. Hydrolyzes single-stranded polyribonucleotides processively in the 3' to 5' direction. This chain is Exoribonuclease 2, found in Glaesserella parasuis serovar 5 (strain SH0165) (Haemophilus parasuis).